The following is a 283-amino-acid chain: Thymidylate synthase (283 aa).

Position 22 (R22) interacts with dUMP. Catalysis depends on C160, which acts as the Nucleophile. DUMP-binding positions include 180–183, N191, and 221–223; these read RSCD and HIY. D183 contacts (6R)-5,10-methylene-5,6,7,8-tetrahydrofolate. S282 lines the (6R)-5,10-methylene-5,6,7,8-tetrahydrofolate pocket.

It belongs to the thymidylate synthase family. Bacterial-type ThyA subfamily. In terms of assembly, homodimer.

The protein localises to the cytoplasm. It carries out the reaction dUMP + (6R)-5,10-methylene-5,6,7,8-tetrahydrofolate = 7,8-dihydrofolate + dTMP. It participates in pyrimidine metabolism; dTTP biosynthesis. Functionally, catalyzes the reductive methylation of 2'-deoxyuridine-5'-monophosphate (dUMP) to 2'-deoxythymidine-5'-monophosphate (dTMP) while utilizing 5,10-methylenetetrahydrofolate (mTHF) as the methyl donor and reductant in the reaction, yielding dihydrofolate (DHF) as a by-product. This enzymatic reaction provides an intracellular de novo source of dTMP, an essential precursor for DNA biosynthesis. The sequence is that of Thymidylate synthase from Tolumonas auensis (strain DSM 9187 / NBRC 110442 / TA 4).